A 436-amino-acid chain; its full sequence is Voltage-gated purine nucleotide uniporter SLC17A9 (436 aa).

Transmembrane regions (helical) follow at residues 64 to 84 (IVLS…GHLG), 92 to 112 (VILL…LLAH), 118 to 138 (LAFM…YFPA), 158 to 178 (IVGA…SLLL), 181 to 201 (YGWQ…VWYV), 239 to 259 (PAVW…FILL), 276 to 296 (WIFN…SGFL), 316 to 336 (GMGL…SSFC), 369 to 389 (GFLF…GVCL), and 402 to 422 (CLFN…LVFG).

Belongs to the major facilitator superfamily. Sodium/anion cotransporter family. Widely expressed, but more predominantly in adrenal gland, brain and thyroid.

It is found in the cytoplasmic vesicle. The protein resides in the secretory vesicle. The protein localises to the chromaffin granule membrane. It localises to the secretory vesicle membrane. Its subcellular location is the lysosome membrane. It catalyses the reaction ATP(in) = ATP(out). It carries out the reaction ADP(in) = ADP(out). The catalysed reaction is GTP(in) = GTP(out). Activity is chloride-dependent. Inhibited by AMP-PNP, gammaS-ATP, diadenosine triphosphate, 4,4'- diisothiocyanatostilbene-2,2'-disulfonate (DIDS) and Evans blue. Functionally, voltage-gated ATP nucleotide uniporter that can also transport the purine nucleotides ADP and GTP. Uses the membrane potential as the driving force to control ATP accumulation in lysosomes and secretory vesicles. By controlling ATP storage in lysosomes, regulates ATP-dependent proteins of these organelles. Also indirectly regulates the exocytosis of ATP through its import into lysosomes in astrocytes and secretory vesicles such as adrenal chromaffin granules, mucin granules and synaptic vesicles. This is Voltage-gated purine nucleotide uniporter SLC17A9 from Homo sapiens (Human).